Reading from the N-terminus, the 822-residue chain is Molybdenum cofactor sulfurase (822 aa).

Position 239 is an N6-(pyridoxal phosphate)lysine (K239). Residue C401 is part of the active site. A disordered region spans residues 633–666 (TRISNPTRSSRRSQRALMPGSFPEDPSPTSEQPP). The 178-residue stretch at 643-820 (RRSQRALMPG…VMVGDVVTPQ (178 aa)) folds into the MOSC domain.

It belongs to the class-V pyridoxal-phosphate-dependent aminotransferase family. MOCOS subfamily. The cofactor is pyridoxal 5'-phosphate.

It carries out the reaction Mo-molybdopterin + L-cysteine + AH2 = thio-Mo-molybdopterin + L-alanine + A + H2O. The protein operates within cofactor biosynthesis; molybdopterin biosynthesis. In terms of biological role, sulfurates the molybdenum cofactor. Sulfation of molybdenum is essential for xanthine dehydrogenase (XDH) and aldehyde oxidase (ADO) enzymes in which molybdenum cofactor is liganded by 1 oxygen and 1 sulfur atom in active form. In Aspergillus oryzae (strain ATCC 42149 / RIB 40) (Yellow koji mold), this protein is Molybdenum cofactor sulfurase.